Reading from the N-terminus, the 112-residue chain is Gastrula zinc finger protein XlCGF9.1 (112 aa).

C2H2-type zinc fingers lie at residues 6 to 28 (FICSDCGKCFNDSSILIRHMKIH), 34 to 56 (FCCPQCGRKFRRRAHLIVHERTH), 62 to 84 (FTCPECGKSFARRSHLMDHRIIH), and 90 to 112 (YSCPECGKCFGLQGYLNKHFKIH).

This sequence belongs to the krueppel C2H2-type zinc-finger protein family.

It localises to the nucleus. Its function is as follows. May be involved in transcriptional regulation. In Xenopus laevis (African clawed frog), this protein is Gastrula zinc finger protein XlCGF9.1.